The chain runs to 338 residues: Ketol-acid reductoisomerase (NADP(+)) (338 aa).

Residues 1–181 (MKVFYDKDCD…GGGKAGIIET (181 aa)) form the KARI N-terminal Rossmann domain. NADP(+) is bound by residues 24-27 (YGSQ), R47, and S52. H107 is a catalytic residue. G133 contributes to the NADP(+) binding site. Residues 182–327 (NFREETETDL…GKLRAMMPWI (146 aa)) form the KARI C-terminal knotted domain. The Mg(2+) site is built by D190, E194, E226, and E230. S251 provides a ligand contact to substrate.

It belongs to the ketol-acid reductoisomerase family. Mg(2+) serves as cofactor.

It catalyses the reaction (2R)-2,3-dihydroxy-3-methylbutanoate + NADP(+) = (2S)-2-acetolactate + NADPH + H(+). The enzyme catalyses (2R,3R)-2,3-dihydroxy-3-methylpentanoate + NADP(+) = (S)-2-ethyl-2-hydroxy-3-oxobutanoate + NADPH + H(+). It participates in amino-acid biosynthesis; L-isoleucine biosynthesis; L-isoleucine from 2-oxobutanoate: step 2/4. Its pathway is amino-acid biosynthesis; L-valine biosynthesis; L-valine from pyruvate: step 2/4. In terms of biological role, involved in the biosynthesis of branched-chain amino acids (BCAA). Catalyzes an alkyl-migration followed by a ketol-acid reduction of (S)-2-acetolactate (S2AL) to yield (R)-2,3-dihydroxy-isovalerate. In the isomerase reaction, S2AL is rearranged via a Mg-dependent methyl migration to produce 3-hydroxy-3-methyl-2-ketobutyrate (HMKB). In the reductase reaction, this 2-ketoacid undergoes a metal-dependent reduction by NADPH to yield (R)-2,3-dihydroxy-isovalerate. The chain is Ketol-acid reductoisomerase (NADP(+)) from Polaromonas naphthalenivorans (strain CJ2).